A 255-amino-acid chain; its full sequence is 5'-nucleotidase SurE (255 aa).

4 residues coordinate a divalent metal cation: aspartate 8, aspartate 9, serine 39, and asparagine 91.

Belongs to the SurE nucleotidase family. Requires a divalent metal cation as cofactor.

The protein localises to the cytoplasm. It carries out the reaction a ribonucleoside 5'-phosphate + H2O = a ribonucleoside + phosphate. Its function is as follows. Nucleotidase that shows phosphatase activity on nucleoside 5'-monophosphates. This is 5'-nucleotidase SurE from Acinetobacter baumannii (strain ATCC 17978 / DSM 105126 / CIP 53.77 / LMG 1025 / NCDC KC755 / 5377).